The following is an 89-amino-acid chain: MADDAAPHADVLNSTAQGQLKSIIDRVERLEVEKTEIAEQIKEVYLEAKGNGFDVKILRKVVRLRKTDRAKRQEEDAILDLYLSAIGEI.

It belongs to the UPF0335 family.

The polypeptide is UPF0335 protein Caul_0876 (Caulobacter sp. (strain K31)).